Here is a 249-residue protein sequence, read N- to C-terminus: MTRYKAIISYDGTLFSGFQRQSQARTVQEEIEKTLQKLTGGQGIQIHGAGITDAGVHAYGQVIHFDLEQKRDPEKLRFALDTQTPDDIDVISLEIAADDFHARYHKHFKTYEFLVDIGRPKNPMMRHYATHYPYPLDIAKMQAAIKDLVGTHDFTGFTAAGTSVKNKVRTITAATLTQDPKTGFLVFTFSGNGFLYKQVRNMVGTLLKIGNGRLPIEQIRLVLESKNRQLAGPTAAGNGLYLKEIIYEE.

Residue D53 is the Nucleophile of the active site. Y111 provides a ligand contact to substrate.

The protein belongs to the tRNA pseudouridine synthase TruA family. In terms of assembly, homodimer.

It catalyses the reaction uridine(38/39/40) in tRNA = pseudouridine(38/39/40) in tRNA. Functionally, formation of pseudouridine at positions 38, 39 and 40 in the anticodon stem and loop of transfer RNAs. This chain is tRNA pseudouridine synthase A, found in Streptococcus equi subsp. zooepidemicus (strain MGCS10565).